The chain runs to 273 residues: Outer surface protein A (273 aa).

Residues 1 to 16 (MKKYLLGIGLILALIA) form the signal peptide. C17 is lipidated: N-palmitoyl cysteine. The S-diacylglycerol cysteine moiety is linked to residue C17.

The protein belongs to the OspA lipoprotein family.

It localises to the cell outer membrane. The protein resides in the cell surface. Functionally, induces host (human and mouse) cytokine release by monocyte cell lines via TLR2 and CD14; nonlipidated protein does not stimulate host cells. The protein is Outer surface protein A of Borreliella burgdorferi (strain ATCC 35210 / DSM 4680 / CIP 102532 / B31) (Borrelia burgdorferi).